A 77-amino-acid polypeptide reads, in one-letter code: UPF0270 protein Spro_4577 (77 aa).

It belongs to the UPF0270 family.

This Serratia proteamaculans (strain 568) protein is UPF0270 protein Spro_4577.